We begin with the raw amino-acid sequence, 63 residues long: uncharacterized protein (63 aa).

This is an uncharacterized protein from Thermoproteus tenax virus 1 (strain KRA1) (TTV1).